Consider the following 464-residue polypeptide: uncharacterized protein (464 aa).

2 disordered regions span residues 290–374 (YRKQ…ERPK) and 445–464 (ETDD…PLEE). Over residues 293 to 302 (QQQWQQQQQQ) the composition is skewed to low complexity. Over residues 303 to 318 (RKVKTPIKKQEAKKKA) the composition is skewed to basic residues. Positions 352 to 367 (DMKQQQQMEKGTTSKQ) are enriched in polar residues. Over residues 445–454 (ETDDEDEENQ) the composition is skewed to acidic residues.

This is an uncharacterized protein from Macaca fascicularis (Crab-eating macaque).